The following is a 431-amino-acid chain: Trigger factor (431 aa).

One can recognise a PPIase FKBP-type domain in the interval 165 to 250; the sequence is GDTVVIDFDG…IHELKRKELP (86 aa).

Belongs to the FKBP-type PPIase family. Tig subfamily.

The protein resides in the cytoplasm. The enzyme catalyses [protein]-peptidylproline (omega=180) = [protein]-peptidylproline (omega=0). Involved in protein export. Acts as a chaperone by maintaining the newly synthesized protein in an open conformation. Functions as a peptidyl-prolyl cis-trans isomerase. This Leuconostoc mesenteroides subsp. mesenteroides (strain ATCC 8293 / DSM 20343 / BCRC 11652 / CCM 1803 / JCM 6124 / NCDO 523 / NBRC 100496 / NCIMB 8023 / NCTC 12954 / NRRL B-1118 / 37Y) protein is Trigger factor.